We begin with the raw amino-acid sequence, 399 residues long: Argonaute-binding protein 1 (399 aa).

Component of the argonaute siRNA chaperone (ARC) complex composed of ago1, arb1 and arb2. Interacts with ago1.

It is found in the nucleus. It localises to the cytoplasm. Component of the argonaute siRNA chaperone (ARC) complex which is required for histone H3K9 methylation, heterochromatin assembly and siRNA generation. The ARC complex contains mostly double-stranded siRNA. Inhibits the release of the siRNA passenger strand from ago1 together with arb2. Inhibits the slicer activity of ago1. Required for swi6 localization to the centromeric repeats. The protein is Argonaute-binding protein 1 (arb1) of Schizosaccharomyces pombe (strain 972 / ATCC 24843) (Fission yeast).